The chain runs to 368 residues: tRNA-specific 2-thiouridylase MnmA (368 aa).

ATP-binding positions include 10–17 (AMSGGIDS) and methionine 36. Cysteine 106 acts as the Nucleophile in catalysis. Cysteines 106 and 203 form a disulfide. Residue glycine 130 coordinates ATP. Residues 152-154 (KDQ) are interaction with tRNA. The Cysteine persulfide intermediate role is filled by cysteine 203. Residues 313–314 (RY) are interaction with tRNA.

This sequence belongs to the MnmA/TRMU family.

The protein resides in the cytoplasm. The catalysed reaction is S-sulfanyl-L-cysteinyl-[protein] + uridine(34) in tRNA + AH2 + ATP = 2-thiouridine(34) in tRNA + L-cysteinyl-[protein] + A + AMP + diphosphate + H(+). In terms of biological role, catalyzes the 2-thiolation of uridine at the wobble position (U34) of tRNA, leading to the formation of s(2)U34. In Cytophaga hutchinsonii (strain ATCC 33406 / DSM 1761 / CIP 103989 / NBRC 15051 / NCIMB 9469 / D465), this protein is tRNA-specific 2-thiouridylase MnmA.